The following is a 753-amino-acid chain: Photosystem I P700 chlorophyll a apoprotein A1 (753 aa).

8 consecutive transmembrane segments (helical) span residues 73-96 (IFSA…FHAA), 159-182 (LYSA…YHYH), 198-222 (MTHH…HVSL), 294-312 (IAHH…GHMY), 349-372 (WHAQ…HHMY), 388-414 (LNLF…IFMV), 436-458 (TIIS…LYIH), and 534-552 (FMIH…LILI). Residues cysteine 576 and cysteine 585 each contribute to the [4Fe-4S] cluster site. The next 2 membrane-spanning stretches (helical) occupy residues 592–613 (HIFL…HFFW) and 667–689 (LSAY…MFLF). Histidine 678 is a binding site for chlorophyll a'. Methionine 686 and tyrosine 694 together coordinate chlorophyll a. Tryptophan 695 is a phylloquinone binding site. Residues 727–747 (AVGLGHYLLGGIVTSWSFYLA) form a helical membrane-spanning segment.

It belongs to the PsaA/PsaB family. As to quaternary structure, the PsaA/B heterodimer binds the P700 chlorophyll special pair and subsequent electron acceptors. PSI consists of a core antenna complex that captures photons, and an electron transfer chain that converts photonic excitation into a charge separation. The cyanobacterial PSI reaction center is composed of one copy each of PsaA,B,C,D,E,F,I,J,K,L,M and X, and forms trimeric complexes. It depends on PSI electron transfer chain: 5 chlorophyll a, 1 chlorophyll a', 2 phylloquinones and 3 4Fe-4S clusters. PSI core antenna: 90 chlorophyll a, 22 carotenoids, 3 phospholipids and 1 galactolipid. P700 is a chlorophyll a/chlorophyll a' dimer, A0 is one or more chlorophyll a, A1 is one or both phylloquinones and FX is a shared 4Fe-4S iron-sulfur center. as a cofactor.

The protein localises to the cellular thylakoid membrane. It carries out the reaction reduced [plastocyanin] + hnu + oxidized [2Fe-2S]-[ferredoxin] = oxidized [plastocyanin] + reduced [2Fe-2S]-[ferredoxin]. PsaA and PsaB bind P700, the primary electron donor of photosystem I (PSI), as well as the electron acceptors A0, A1 and FX. PSI is a plastocyanin/cytochrome c6-ferredoxin oxidoreductase, converting photonic excitation into a charge separation, which transfers an electron from the donor P700 chlorophyll pair to the spectroscopically characterized acceptors A0, A1, FX, FA and FB in turn. Oxidized P700 is reduced on the lumenal side of the thylakoid membrane by plastocyanin or cytochrome c6. In Acaryochloris marina (strain MBIC 11017), this protein is Photosystem I P700 chlorophyll a apoprotein A1.